The primary structure comprises 523 residues: Bifunctional purine biosynthesis protein PurH (523 aa).

The MGS-like domain maps to 1–150 (MSDVVPVRNA…KNHGDVAIAT (150 aa)).

This sequence belongs to the PurH family.

The enzyme catalyses (6R)-10-formyltetrahydrofolate + 5-amino-1-(5-phospho-beta-D-ribosyl)imidazole-4-carboxamide = 5-formamido-1-(5-phospho-D-ribosyl)imidazole-4-carboxamide + (6S)-5,6,7,8-tetrahydrofolate. It catalyses the reaction IMP + H2O = 5-formamido-1-(5-phospho-D-ribosyl)imidazole-4-carboxamide. The protein operates within purine metabolism; IMP biosynthesis via de novo pathway; 5-formamido-1-(5-phospho-D-ribosyl)imidazole-4-carboxamide from 5-amino-1-(5-phospho-D-ribosyl)imidazole-4-carboxamide (10-formyl THF route): step 1/1. It participates in purine metabolism; IMP biosynthesis via de novo pathway; IMP from 5-formamido-1-(5-phospho-D-ribosyl)imidazole-4-carboxamide: step 1/1. This is Bifunctional purine biosynthesis protein PurH from Rhodopirellula baltica (strain DSM 10527 / NCIMB 13988 / SH1).